A 520-amino-acid chain; its full sequence is DEP domain-containing protein 7 (520 aa).

Residues 45–137 enclose the DEP domain; that stretch reads ALTQVEVKKR…SSCSLYRFIN (93 aa). The disordered stretch occupies residues 148 to 167; that stretch reads KSNGRCTPQRPKHSSFQSAP.

The protein belongs to the DEPDC7 family.

This is DEP domain-containing protein 7 (depdc7) from Xenopus tropicalis (Western clawed frog).